Here is a 544-residue protein sequence, read N- to C-terminus: Chaperonin GroEL (544 aa).

ATP-binding positions include 29–32 (TLGP), 86–90 (DGTTT), Gly-413, 476–478 (NAA), and Asp-492.

It belongs to the chaperonin (HSP60) family. As to quaternary structure, forms a cylinder of 14 subunits composed of two heptameric rings stacked back-to-back. Interacts with the co-chaperonin GroES.

The protein localises to the cytoplasm. It localises to the secreted. It carries out the reaction ATP + H2O + a folded polypeptide = ADP + phosphate + an unfolded polypeptide.. Functionally, together with its co-chaperonin GroES, plays an essential role in assisting protein folding. The GroEL-GroES system forms a nano-cage that allows encapsulation of the non-native substrate proteins and provides a physical environment optimized to promote and accelerate protein folding. The polypeptide is Chaperonin GroEL (Bacillus subtilis (strain 168)).